We begin with the raw amino-acid sequence, 470 residues long: Poly(A) polymerase catalytic subunit (470 aa).

Residues Asp192 and Asp194 contribute to the active site.

Belongs to the poxviridae poly(A) polymerase catalytic subunit family. Heterodimer of a large (catalytic) subunit and a small (regulatory) subunit.

The catalysed reaction is RNA(n) + ATP = RNA(n)-3'-adenine ribonucleotide + diphosphate. In terms of biological role, polymerase that creates the 3'-poly(A) tail of mRNA's. The polypeptide is Poly(A) polymerase catalytic subunit (PAPL) (Homo sapiens (Human)).